We begin with the raw amino-acid sequence, 261 residues long: MILDKIIRYKKNKVKEEKVAVPLGEIMKQIEDMEEARNFKAALVGRESISMIAEVKKASPSKGIIKKDFNPVKIAAEYEKNRVDAISVLTEDQFFLGDNRYLQDIRKMTTIPLLRKDFMIDAYQIYQSKALGADAILLIAAALTKKEMIAFQKIAAEIGIYSLVEVHNKEELEMILETGAEIIGINNRDLKTFDTTLDRTAELLPFIPKDKIVVSESGIKTNQDMKLLKNYGINAVLMGEGLMRADSIGEKLRELRSGLCD.

This sequence belongs to the TrpC family.

It carries out the reaction 1-(2-carboxyphenylamino)-1-deoxy-D-ribulose 5-phosphate + H(+) = (1S,2R)-1-C-(indol-3-yl)glycerol 3-phosphate + CO2 + H2O. It functions in the pathway amino-acid biosynthesis; L-tryptophan biosynthesis; L-tryptophan from chorismate: step 4/5. This Alkaliphilus metalliredigens (strain QYMF) protein is Indole-3-glycerol phosphate synthase.